A 296-amino-acid chain; its full sequence is NAD kinase (296 aa).

The active-site Proton acceptor is Asp-73. NAD(+) contacts are provided by residues 73–74 (DG), Lys-78, 151–152 (NE), Arg-178, Asp-180, and 191–196 (TAHAMS).

The protein belongs to the NAD kinase family. The cofactor is a divalent metal cation.

It localises to the cytoplasm. It carries out the reaction NAD(+) + ATP = ADP + NADP(+) + H(+). In terms of biological role, involved in the regulation of the intracellular balance of NAD and NADP, and is a key enzyme in the biosynthesis of NADP. Catalyzes specifically the phosphorylation on 2'-hydroxyl of the adenosine moiety of NAD to yield NADP. The chain is NAD kinase from Francisella tularensis subsp. tularensis (strain WY96-3418).